Here is a 415-residue protein sequence, read N- to C-terminus: Adipocyte plasma membrane-associated protein (415 aa).

Residues 1–29 are disordered; that stretch reads MSEADGLRQRRPLRPQVVTDDGQVPEVKE. Serine 2 bears the N-acetylserine mark. Over 2-39 the chain is Cytoplasmic; the sequence is SEADGLRQRRPLRPQVVTDDGQVPEVKEGSSFSGRVFR. Residue threonine 19 is modified to Phosphothreonine. A helical; Signal-anchor for type II membrane protein transmembrane segment spans residues 40–60; that stretch reads MTFLMLAVSLAIPLLGAMMLL. The Extracellular segment spans residues 61-415; it reads ESPIDPQSFS…FICRLSLQSI (355 aa). Asparagine 159 is a glycosylation site (N-linked (GlcNAc...) asparagine).

This sequence belongs to the strictosidine synthase family. Glycosylated in vitro. Strongly expressed in adipose tissue. Highly expressed in liver, heart, and kidney. Expressed at intermediate level in brain and lung. Weakly expressed in spleen, skeletal muscle and testis.

It is found in the membrane. Functionally, exhibits strong arylesterase activity with beta-naphthyl acetate and phenyl acetate. May play a role in adipocyte differentiation. This Mus musculus (Mouse) protein is Adipocyte plasma membrane-associated protein (Apmap).